A 670-amino-acid polypeptide reads, in one-letter code: UvrABC system protein B (670 aa).

Residues 26–183 enclose the Helicase ATP-binding domain; it reads EGLEDGLAHQ…RRLAELQYSR (158 aa). ATP is bound at residue 39 to 46; it reads GVTGSGKT. The Beta-hairpin motif lies at 92 to 115; it reads YYDYYQPEAYVPSSDTFIEKDASV. The 167-residue stretch at 431–597 folds into the Helicase C-terminal domain; sequence QVDDLLSEIR…GLNKKISDIL (167 aa). Positions 630–665 constitute a UVR domain; the sequence is ELKIRELESKMLTHAQNLEFEEAAALRDELQALRAQ.

It belongs to the UvrB family. Forms a heterotetramer with UvrA during the search for lesions. Interacts with UvrC in an incision complex.

It is found in the cytoplasm. Its function is as follows. The UvrABC repair system catalyzes the recognition and processing of DNA lesions. A damage recognition complex composed of 2 UvrA and 2 UvrB subunits scans DNA for abnormalities. Upon binding of the UvrA(2)B(2) complex to a putative damaged site, the DNA wraps around one UvrB monomer. DNA wrap is dependent on ATP binding by UvrB and probably causes local melting of the DNA helix, facilitating insertion of UvrB beta-hairpin between the DNA strands. Then UvrB probes one DNA strand for the presence of a lesion. If a lesion is found the UvrA subunits dissociate and the UvrB-DNA preincision complex is formed. This complex is subsequently bound by UvrC and the second UvrB is released. If no lesion is found, the DNA wraps around the other UvrB subunit that will check the other stand for damage. This is UvrABC system protein B from Pectobacterium carotovorum subsp. carotovorum (strain PC1).